The following is a 409-amino-acid chain: Lactadherin (409 aa).

2 consecutive EGF-like domains span residues 2–41 (SGDF…LICN) and 44–88 (EKGP…IHCE). Cystine bridges form between Cys-6/Cys-17, Cys-11/Cys-29, and Cys-31/Cys-40. N-linked (GlcNAc...) asparagine glycosylation occurs at Asn-41. Disulfide bonds link Cys-48/Cys-59, Cys-53/Cys-76, Cys-78/Cys-87, Cys-91/Cys-247, Cys-234/Cys-238, and Cys-252/Cys-409. Residues 67-69 (RGD) carry the Cell attachment site motif. 2 consecutive F5/8 type C domains span residues 91-247 (CNAP…LLGC) and 252-409 (CAEP…LLGC). Asn-372 carries an N-linked (GlcNAc...) asparagine glycan.

In terms of tissue distribution, mammary epithelial cell surfaces and spermatozoan. Also present in testis, epididymis, uterus, adrenal gland, tonsil, muscle, heart, lymphatic gland, thymus and kidney but not spleen, liver, lung or brain.

The protein resides in the membrane. The protein localises to the secreted. It is found in the cytoplasmic vesicle. Its subcellular location is the secretory vesicle. It localises to the acrosome membrane. In terms of biological role, contributes to phagocytic removal of apoptotic cells in many tissues. Plays an important role in the maintenance of intestinal epithelial homeostasis and the promotion of mucosal healing. Promotes VEGF-dependent neovascularization. Specific ligand for the alpha-v/beta-3 and alpha-v/beta-5 receptors. Also binds to phosphatidylserine-enriched cell surfaces in a receptor-independent manner. Zona pellucida-binding protein which may play a role in gamete interaction. This Sus scrofa (Pig) protein is Lactadherin (MFGE8).